We begin with the raw amino-acid sequence, 389 residues long: Glutamate 5-kinase (389 aa).

K16 contacts ATP. Substrate-binding residues include S56, D143, and N155. Residue 175–176 (SD) coordinates ATP. In terms of domain architecture, PUA spans 281-358 (AGELHVDEGA…AEIEAILGYA (78 aa)).

It belongs to the glutamate 5-kinase family.

It is found in the cytoplasm. It catalyses the reaction L-glutamate + ATP = L-glutamyl 5-phosphate + ADP. It participates in amino-acid biosynthesis; L-proline biosynthesis; L-glutamate 5-semialdehyde from L-glutamate: step 1/2. In terms of biological role, catalyzes the transfer of a phosphate group to glutamate to form L-glutamate 5-phosphate. The chain is Glutamate 5-kinase from Rhizobium etli (strain ATCC 51251 / DSM 11541 / JCM 21823 / NBRC 15573 / CFN 42).